The sequence spans 240 residues: UDP-2,3-diacylglucosamine hydrolase (240 aa).

Positions 8, 10, 41, 79, and 114 each coordinate Mn(2+). Residue 79–80 participates in substrate binding; the sequence is NR. Substrate-binding residues include Asp122, Ser160, Asn164, Lys167, and His195. Mn(2+)-binding residues include His195 and His197.

Belongs to the LpxH family. Requires Mn(2+) as cofactor.

It localises to the cell inner membrane. The enzyme catalyses UDP-2-N,3-O-bis[(3R)-3-hydroxytetradecanoyl]-alpha-D-glucosamine + H2O = 2-N,3-O-bis[(3R)-3-hydroxytetradecanoyl]-alpha-D-glucosaminyl 1-phosphate + UMP + 2 H(+). It participates in glycolipid biosynthesis; lipid IV(A) biosynthesis; lipid IV(A) from (3R)-3-hydroxytetradecanoyl-[acyl-carrier-protein] and UDP-N-acetyl-alpha-D-glucosamine: step 4/6. In terms of biological role, hydrolyzes the pyrophosphate bond of UDP-2,3-diacylglucosamine to yield 2,3-diacylglucosamine 1-phosphate (lipid X) and UMP by catalyzing the attack of water at the alpha-P atom. Involved in the biosynthesis of lipid A, a phosphorylated glycolipid that anchors the lipopolysaccharide to the outer membrane of the cell. The protein is UDP-2,3-diacylglucosamine hydrolase of Salmonella dublin (strain CT_02021853).